Consider the following 126-residue polypeptide: Large-conductance mechanosensitive channel (126 aa).

2 helical membrane passes run 14-34 and 66-86; these read VIDLAVGVVIGTAFSAVVNSL and FITTIVNFLIISAALYFLVVV.

Belongs to the MscL family. Homopentamer.

It is found in the cell membrane. Channel that opens in response to stretch forces in the membrane lipid bilayer. May participate in the regulation of osmotic pressure changes within the cell. This is Large-conductance mechanosensitive channel from Roseiflexus sp. (strain RS-1).